We begin with the raw amino-acid sequence, 447 residues long: Pentatricopeptide repeat-containing protein At3g53170 (447 aa).

10 PPR repeats span residues 93-127 (RCKT…GLKP), 128-158 (TIDV…MKSV), 164-198 (DVFT…GVGC), 199-233 (STVT…GDSL), 235-269 (DVCT…GVQP), 270-304 (DITT…FFSL), 305-339 (TTVT…GVKP), 340-374 (NSIT…DVVL), 375-409 (DTPF…KCKP), and 410-444 (DKIT…GENL).

The protein belongs to the PPR family. P subfamily.

This Arabidopsis thaliana (Mouse-ear cress) protein is Pentatricopeptide repeat-containing protein At3g53170.